We begin with the raw amino-acid sequence, 125 residues long: Protein U2 (125 aa).

It belongs to the nanovirus U2 protein family.

The protein is Protein U2 (DNA-U2) of Milk vetch dwarf virus (isolate N) (MDV).